The sequence spans 490 residues: ATP synthase subunit beta, chloroplastic (490 aa).

170–177 (GGAGVGKT) is a binding site for ATP.

The protein belongs to the ATPase alpha/beta chains family. In terms of assembly, F-type ATPases have 2 components, CF(1) - the catalytic core - and CF(0) - the membrane proton channel. CF(1) has five subunits: alpha(3), beta(3), gamma(1), delta(1), epsilon(1). CF(0) has four main subunits: a(1), b(1), b'(1) and c(9-12).

It is found in the plastid. The protein localises to the chloroplast thylakoid membrane. The enzyme catalyses ATP + H2O + 4 H(+)(in) = ADP + phosphate + 5 H(+)(out). Functionally, produces ATP from ADP in the presence of a proton gradient across the membrane. The catalytic sites are hosted primarily by the beta subunits. The protein is ATP synthase subunit beta, chloroplastic of Ipomoea wrightii (Wright's morning glory).